A 191-amino-acid chain; its full sequence is uncharacterized protein (191 aa).

Residues Glu-87 to Gly-184 enclose the Fe2OG dioxygenase domain.

This is an uncharacterized protein from Acanthamoeba polyphaga mimivirus (APMV).